Reading from the N-terminus, the 102-residue chain is Antitoxin VapB46 (102 aa).

It belongs to the phD/YefM antitoxin family.

Functionally, antitoxin component of a type II toxin-antitoxin (TA) system. Neutralizes the effect of cognate toxin VapC46. The protein is Antitoxin VapB46 (vapB46) of Mycobacterium tuberculosis (strain CDC 1551 / Oshkosh).